A 267-amino-acid chain; its full sequence is Methyl-coenzyme M reductase II subunit gamma (267 aa).

Residue arginine 123 participates in coenzyme M binding.

This sequence belongs to the methyl-coenzyme M reductase gamma subunit family. As to quaternary structure, MCR is a hexamer of two alpha, two beta, and two gamma chains, forming a dimer of heterotrimers. Coenzyme F430 serves as cofactor.

It carries out the reaction coenzyme B + methyl-coenzyme M = methane + coenzyme M-coenzyme B heterodisulfide. It participates in one-carbon metabolism; methyl-coenzyme M reduction; methane from methyl-coenzyme M: step 1/1. Functionally, component of the methyl-coenzyme M reductase (MCR) I that catalyzes the reductive cleavage of methyl-coenzyme M (CoM-S-CH3 or 2-(methylthio)ethanesulfonate) using coenzyme B (CoB or 7-mercaptoheptanoylthreonine phosphate) as reductant which results in the production of methane and the mixed heterodisulfide of CoB and CoM (CoM-S-S-CoB). This is the final step in methanogenesis. The sequence is that of Methyl-coenzyme M reductase II subunit gamma (mrtG) from Methanothermus fervidus (strain ATCC 43054 / DSM 2088 / JCM 10308 / V24 S).